The sequence spans 501 residues: Glycerol kinase (501 aa).

Residue threonine 12 participates in ADP binding. 3 residues coordinate ATP: threonine 12, threonine 13, and serine 14. Sn-glycerol 3-phosphate is bound at residue threonine 12. Arginine 16 contacts ADP. Sn-glycerol 3-phosphate is bound by residues arginine 82, glutamate 83, tyrosine 135, and aspartate 244. Glycerol-binding residues include arginine 82, glutamate 83, tyrosine 135, aspartate 244, and glutamine 245. The ADP site is built by threonine 266, glycine 309, glycine 409, and asparagine 413. Threonine 266, glycine 309, and glycine 409 together coordinate ATP.

The protein belongs to the FGGY kinase family.

It catalyses the reaction glycerol + ATP = sn-glycerol 3-phosphate + ADP + H(+). It functions in the pathway polyol metabolism; glycerol degradation via glycerol kinase pathway; sn-glycerol 3-phosphate from glycerol: step 1/1. With respect to regulation, inhibited by fructose 1,6-bisphosphate (FBP). Its function is as follows. Key enzyme in the regulation of glycerol uptake and metabolism. Catalyzes the phosphorylation of glycerol to yield sn-glycerol 3-phosphate. This chain is Glycerol kinase, found in Coxiella burnetii (strain Dugway 5J108-111).